Consider the following 124-residue polypeptide: Fluoride-specific ion channel FluC (124 aa).

4 helical membrane-spanning segments follow: residues 4–24 (IVAI…LAGW), 32–52 (GFPY…GLIM), 67–87 (IGLT…SYET), and 96–116 (FITA…CTWL). Na(+) contacts are provided by Gly75 and Thr78.

It belongs to the fluoride channel Fluc/FEX (TC 1.A.43) family.

It is found in the cell inner membrane. It catalyses the reaction fluoride(in) = fluoride(out). Na(+) is not transported, but it plays an essential structural role and its presence is essential for fluoride channel function. Functionally, fluoride-specific ion channel. Important for reducing fluoride concentration in the cell, thus reducing its toxicity. In Geobacter metallireducens (strain ATCC 53774 / DSM 7210 / GS-15), this protein is Fluoride-specific ion channel FluC.